A 472-amino-acid chain; its full sequence is H(+)/Cl(-) exchange transporter ClcA (472 aa).

Topologically, residues 1–32 are cytoplasmic; sequence MKAETPSFEAHQFVRVRRGDAVRRLIQRDKTP. A helical transmembrane segment spans residues 33-69; it reads LAVLFMAAVVGTLAGLVGVAFEKSVNWVQNQRIGALA. At 70–76 the chain is on the periplasmic side; sequence QVADHWY. Residues 77–100 traverse the membrane as a helical segment; that stretch reads LVWPLAFILSALLAMVGYFLVRRF. Positions 106-110 match the Selectivity filter part_1 motif; it reads GSGIP. Residue Ser107 coordinates chloride. The segment at residues 109–116 is an intramembrane region (helical); it reads IPEIEGAL. Over 117 to 123 the chain is Cytoplasmic; the sequence is EELRPVR. The next 2 helical transmembrane spans lie at 124–141 and 148–166; these read WWRVLPVKFVGGMGTLGA and EGPMVQLGGNIGRMVLDVF. The Selectivity filter part_2 motif lies at 146–150; the sequence is GREGP. At 167–176 the chain is on the cytoplasmic side; it reads RMRSPEARHT. 2 intramembrane regions (helical) span residues 177–189 and 193–201; these read LLATGAASGLSAA and PLAGILFII. At 202–214 the chain is on the cytoplasmic side; the sequence is EEMRPQFRYNLIS. Residues 215–232 traverse the membrane as a helical segment; sequence IKAVFTGVIMSSIVFRIF. Residues 233 to 252 lie on the Periplasmic side of the membrane; that stretch reads NGEAAIIEVGKLSNAPVNTL. A helical membrane pass occupies residues 253 to 281; that stretch reads WLYLVLGMLFGCFGPLFNFLVLRTQDLFQ. At 282–287 the chain is on the cytoplasmic side; the sequence is RIHGGN. A helical membrane pass occupies residues 288–309; that stretch reads IKKWVLIGGLIGGLCGLLGLMQ. At 310–329 the chain is on the periplasmic side; it reads PSAVGGGFNLIPIAAAGNFS. Helical transmembrane passes span 330 to 349 and 355 to 376; these read VGLLLFIFIARVVTTLICFS and GIFAPMLALGTLLGTAFGMAAI. Residues 355–359 carry the Selectivity filter part_3 motif; sequence GIFAP. 2 residues coordinate chloride: Ile356 and Phe357. At 377–386 the chain is on the periplasmic side; sequence PLFPAYHLDA. The segment at residues 387–401 is an intramembrane region (helical); that stretch reads GTFAIAGMGALLAAS. Residues 402 to 404 constitute an intramembrane region (note=Loop between two helices); it reads VRA. The helical intramembrane region spans 405–416; it reads PLTGIVLVLEMT. Positions 417–421 form an intramembrane region, note=Loop between two helices; it reads DNYQL. The helical transmembrane segment at 422–438 threads the bilayer; sequence ILPMIITCLGATLLAQF. The Cytoplasmic segment spans residues 439 to 472; the sequence is LGGKPLYSTILQRTLAKQEAEQAAKAQQAPRENT. Residue Tyr445 participates in chloride binding.

The protein belongs to the chloride channel (TC 2.A.49) family. ClcA subfamily. Homodimer.

The protein localises to the cell inner membrane. It catalyses the reaction 2 chloride(in) + H(+)(out) = 2 chloride(out) + H(+)(in). Proton-coupled chloride transporter. Functions as antiport system and exchanges two chloride ions for 1 proton. Probably acts as an electrical shunt for an outwardly-directed proton pump that is linked to amino acid decarboxylation, as part of the extreme acid resistance (XAR) response. The polypeptide is H(+)/Cl(-) exchange transporter ClcA (Klebsiella pneumoniae subsp. pneumoniae (strain ATCC 700721 / MGH 78578)).